Reading from the N-terminus, the 363-residue chain is 3-isopropylmalate dehydrogenase (363 aa).

An NAD(+)-binding site is contributed by glycine 78–glutamate 91. Residues arginine 99, arginine 109, arginine 138, and aspartate 227 each coordinate substrate. Mg(2+)-binding residues include aspartate 227, aspartate 251, and aspartate 255. NAD(+) is bound at residue glycine 285–asparagine 297.

The protein belongs to the isocitrate and isopropylmalate dehydrogenases family. LeuB type 1 subfamily. In terms of assembly, homodimer. It depends on Mg(2+) as a cofactor. The cofactor is Mn(2+).

The protein resides in the cytoplasm. The enzyme catalyses (2R,3S)-3-isopropylmalate + NAD(+) = 4-methyl-2-oxopentanoate + CO2 + NADH. It functions in the pathway amino-acid biosynthesis; L-leucine biosynthesis; L-leucine from 3-methyl-2-oxobutanoate: step 3/4. In terms of biological role, catalyzes the oxidation of 3-carboxy-2-hydroxy-4-methylpentanoate (3-isopropylmalate) to 3-carboxy-4-methyl-2-oxopentanoate. The product decarboxylates to 4-methyl-2 oxopentanoate. This Buchnera aphidicola subsp. Diuraphis noxia protein is 3-isopropylmalate dehydrogenase.